Here is a 399-residue protein sequence, read N- to C-terminus: 4-hydroxy-3-methylbut-2-enyl diphosphate reductase (399 aa).

Residue C66 coordinates [4Fe-4S] cluster. H96 contacts (2E)-4-hydroxy-3-methylbut-2-enyl diphosphate. H96 is a dimethylallyl diphosphate binding site. H96 serves as a coordination point for isopentenyl diphosphate. C157 is a binding site for [4Fe-4S] cluster. H185 is a (2E)-4-hydroxy-3-methylbut-2-enyl diphosphate binding site. Residue H185 coordinates dimethylallyl diphosphate. Residue H185 participates in isopentenyl diphosphate binding. E187 acts as the Proton donor in catalysis. T250 contributes to the (2E)-4-hydroxy-3-methylbut-2-enyl diphosphate binding site. C288 contacts [4Fe-4S] cluster. (2E)-4-hydroxy-3-methylbut-2-enyl diphosphate-binding residues include S317, S318, N319, and S379. The dimethylallyl diphosphate site is built by S317, S318, N319, and S379. The isopentenyl diphosphate site is built by S317, S318, N319, and S379.

The protein belongs to the IspH family. The cofactor is [4Fe-4S] cluster.

The catalysed reaction is isopentenyl diphosphate + 2 oxidized [2Fe-2S]-[ferredoxin] + H2O = (2E)-4-hydroxy-3-methylbut-2-enyl diphosphate + 2 reduced [2Fe-2S]-[ferredoxin] + 2 H(+). The enzyme catalyses dimethylallyl diphosphate + 2 oxidized [2Fe-2S]-[ferredoxin] + H2O = (2E)-4-hydroxy-3-methylbut-2-enyl diphosphate + 2 reduced [2Fe-2S]-[ferredoxin] + 2 H(+). It functions in the pathway isoprenoid biosynthesis; dimethylallyl diphosphate biosynthesis; dimethylallyl diphosphate from (2E)-4-hydroxy-3-methylbutenyl diphosphate: step 1/1. The protein operates within isoprenoid biosynthesis; isopentenyl diphosphate biosynthesis via DXP pathway; isopentenyl diphosphate from 1-deoxy-D-xylulose 5-phosphate: step 6/6. Catalyzes the conversion of 1-hydroxy-2-methyl-2-(E)-butenyl 4-diphosphate (HMBPP) into a mixture of isopentenyl diphosphate (IPP) and dimethylallyl diphosphate (DMAPP). Acts in the terminal step of the DOXP/MEP pathway for isoprenoid precursor biosynthesis. This Synechococcus sp. (strain WH7803) protein is 4-hydroxy-3-methylbut-2-enyl diphosphate reductase.